The following is a 205-amino-acid chain: ATP phosphoribosyltransferase (205 aa).

It belongs to the ATP phosphoribosyltransferase family. Short subfamily. Heteromultimer composed of HisG and HisZ subunits.

It is found in the cytoplasm. It carries out the reaction 1-(5-phospho-beta-D-ribosyl)-ATP + diphosphate = 5-phospho-alpha-D-ribose 1-diphosphate + ATP. It functions in the pathway amino-acid biosynthesis; L-histidine biosynthesis; L-histidine from 5-phospho-alpha-D-ribose 1-diphosphate: step 1/9. Functionally, catalyzes the condensation of ATP and 5-phosphoribose 1-diphosphate to form N'-(5'-phosphoribosyl)-ATP (PR-ATP). Has a crucial role in the pathway because the rate of histidine biosynthesis seems to be controlled primarily by regulation of HisG enzymatic activity. The polypeptide is ATP phosphoribosyltransferase (Leptospira interrogans serogroup Icterohaemorrhagiae serovar Lai (strain 56601)).